Here is a 132-residue protein sequence, read N- to C-terminus: Dehydratase CTB10 (132 aa).

In terms of domain architecture, EthD spans proline 21–methionine 117.

This sequence belongs to the tpcK family.

It participates in mycotoxin biosynthesis. Functionally, dehydratase; part of the gene cluster that mediates the biosynthesis of cercosporin, a light-activated, non-host-selective toxin. The perylenequinone chromophore of cercosporin absorbs light energy to attain an electronically-activated triplet state and produces active oxygen species such as the hydroxyl radical, superoxide, hydrogen peroxide or singlet oxygen upon reaction with oxygen molecules. These reactive oxygen species cause damage to various cellular components including lipids, proteins and nucleic acids. The first step of cercosporin biosynthesis is performed by the polyketide synthase CTB1 which catalyzes the formation of nor-toralactone. The starter unit acyltransferase (SAT) domain of CTB1 initiates polyketide extension by the selective utilization of acetyl-CoA, which is elongated to the heptaketide in the beta-ketoacyl synthase (KS) domain by successive condensations with six malonyl units introduced by the malonyl acyltransferase (MAT) domain. The product template (PT) domain catalyzes C4-C9 and C2-C11 aldol cyclizations and dehydrations to a trihydroxynaphthalene, which is thought to be delivered to the thioesterase (TE) domain for product release. The bifunctional enzyme CTB3 then methylates nor-toralactone to toralactone before conducting an unusual oxidative aromatic ring opening. The O-methyltransferase CTB2 further methylates the nascent OH-6 of the CBT3 product, blocking further oxidation at this site before the reductase CTB6 reduces the 2-oxopropyl ketone at position C7, giving naphthalene. The FAD-dependent monooxygenase CTB5 in concert with the multicopper oxidase CTB12 are responsible for homodimerization of naphthalene with CTB7 installing the dioxepine moiety, finally producing cercosporin. The fasciclin domain-containing protein CTB11 might act with CTB5 and CTB12 whereas the roles of CTB9 and CTB10 have still to be elucidated. In Cercospora beticola (Sugarbeet leaf spot fungus), this protein is Dehydratase CTB10.